The sequence spans 166 residues: Cofilin-2 (166 aa).

At A2 the chain carries N-acetylalanine. S3 is modified (phosphoserine). Residues 4-153 form the ADF-H domain; sequence GVTVNDEVIK…KDRSTLGEKL (150 aa). The residue at position 6 (T6) is a Phosphothreonine. Positions 30–34 match the Nuclear localization signal motif; sequence KKRKK.

It belongs to the actin-binding proteins ADF family. In terms of assembly, interacts with CSRP3; possibly two molecules of CFL2 can interact with one molecule if CSRP3. The phosphorylation of Ser-24 may prevent recognition of the nuclear localization signal. As to expression, predominantly expressed in skeletal muscle.

The protein resides in the nucleus matrix. Its subcellular location is the cytoplasm. It is found in the cytoskeleton. Controls reversibly actin polymerization and depolymerization in a pH-sensitive manner. It has the ability to bind G- and F-actin in a 1:1 ratio of cofilin to actin. It is the major component of intranuclear and cytoplasmic actin rods. Required for muscle maintenance. May play a role during the exchange of alpha-actin forms during the early postnatal remodeling of the sarcomere. The sequence is that of Cofilin-2 (Cfl2) from Mus musculus (Mouse).